The chain runs to 267 residues: Hydroxyethylthiazole kinase (267 aa).

Met-48 contributes to the substrate binding site. Positions 124 and 170 each coordinate ATP. Gly-197 serves as a coordination point for substrate.

This sequence belongs to the Thz kinase family. It depends on Mg(2+) as a cofactor.

It catalyses the reaction 5-(2-hydroxyethyl)-4-methylthiazole + ATP = 4-methyl-5-(2-phosphooxyethyl)-thiazole + ADP + H(+). Its pathway is cofactor biosynthesis; thiamine diphosphate biosynthesis; 4-methyl-5-(2-phosphoethyl)-thiazole from 5-(2-hydroxyethyl)-4-methylthiazole: step 1/1. Functionally, catalyzes the phosphorylation of the hydroxyl group of 4-methyl-5-beta-hydroxyethylthiazole (THZ). This is Hydroxyethylthiazole kinase from Aliivibrio fischeri (strain ATCC 700601 / ES114) (Vibrio fischeri).